The sequence spans 457 residues: Exodeoxyribonuclease 7 large subunit (457 aa).

This sequence belongs to the XseA family. As to quaternary structure, heterooligomer composed of large and small subunits.

It localises to the cytoplasm. It carries out the reaction Exonucleolytic cleavage in either 5'- to 3'- or 3'- to 5'-direction to yield nucleoside 5'-phosphates.. In terms of biological role, bidirectionally degrades single-stranded DNA into large acid-insoluble oligonucleotides, which are then degraded further into small acid-soluble oligonucleotides. The sequence is that of Exodeoxyribonuclease 7 large subunit from Cronobacter sakazakii (strain ATCC BAA-894) (Enterobacter sakazakii).